A 472-amino-acid polypeptide reads, in one-letter code: Adenosylhomocysteinase (472 aa).

Substrate contacts are provided by Thr-61, Asp-136, and Glu-196. 197-199 contributes to the NAD(+) binding site; that stretch reads TTT. Residues Lys-226 and Asp-230 each coordinate substrate. Residues Asn-231, 260-265, Glu-283, Asn-318, 339-341, and Asn-384 each bind NAD(+); these read GYGDVG and IGH.

The protein belongs to the adenosylhomocysteinase family. Requires NAD(+) as cofactor.

It is found in the cytoplasm. It carries out the reaction S-adenosyl-L-homocysteine + H2O = L-homocysteine + adenosine. It participates in amino-acid biosynthesis; L-homocysteine biosynthesis; L-homocysteine from S-adenosyl-L-homocysteine: step 1/1. Its function is as follows. May play a key role in the regulation of the intracellular concentration of adenosylhomocysteine. This is Adenosylhomocysteinase from Cupriavidus pinatubonensis (strain JMP 134 / LMG 1197) (Cupriavidus necator (strain JMP 134)).